Consider the following 86-residue polypeptide: Polcalcin Che a 3 (86 aa).

EF-hand domains are found at residues 8 to 43 and 43 to 78; these read QDIA…LGSV and VTPD…NRGL. Ca(2+) contacts are provided by Asp-21, Asn-23, Asp-25, Lys-27, Glu-32, Asp-56, Asp-58, Asp-60, and Glu-67.

The protein is Polcalcin Che a 3 of Chenopodium album (Fat hen).